The following is a 316-amino-acid chain: Transaldolase (316 aa).

The Schiff-base intermediate with substrate role is filled by K132.

It belongs to the transaldolase family. Type 1 subfamily. As to quaternary structure, homodimer.

Its subcellular location is the cytoplasm. The catalysed reaction is D-sedoheptulose 7-phosphate + D-glyceraldehyde 3-phosphate = D-erythrose 4-phosphate + beta-D-fructose 6-phosphate. It functions in the pathway carbohydrate degradation; pentose phosphate pathway; D-glyceraldehyde 3-phosphate and beta-D-fructose 6-phosphate from D-ribose 5-phosphate and D-xylulose 5-phosphate (non-oxidative stage): step 2/3. Transaldolase is important for the balance of metabolites in the pentose-phosphate pathway. In Aliivibrio fischeri (strain ATCC 700601 / ES114) (Vibrio fischeri), this protein is Transaldolase.